The primary structure comprises 346 residues: Dihydroorotase (346 aa).

The Zn(2+) site is built by His-14 and His-16. Substrate contacts are provided by residues 16–18 (HLR) and Asn-42. Lys-100, His-137, and His-175 together coordinate Zn(2+). Lys-100 carries the post-translational modification N6-carboxylysine. His-137 contributes to the substrate binding site. A substrate-binding site is contributed by Leu-220. Zn(2+) is bound at residue Asp-248. Residue Asp-248 is part of the active site. 2 residues coordinate substrate: His-252 and Ala-264.

The protein belongs to the metallo-dependent hydrolases superfamily. DHOase family. Class II DHOase subfamily. Homodimer. Requires Zn(2+) as cofactor.

The enzyme catalyses (S)-dihydroorotate + H2O = N-carbamoyl-L-aspartate + H(+). It participates in pyrimidine metabolism; UMP biosynthesis via de novo pathway; (S)-dihydroorotate from bicarbonate: step 3/3. Catalyzes the reversible cyclization of carbamoyl aspartate to dihydroorotate. The chain is Dihydroorotase from Ruegeria pomeroyi (strain ATCC 700808 / DSM 15171 / DSS-3) (Silicibacter pomeroyi).